We begin with the raw amino-acid sequence, 498 residues long: ATP synthase subunit beta, chloroplastic (498 aa).

Residue 172 to 179 (GGAGVGKT) coordinates ATP.

It belongs to the ATPase alpha/beta chains family. As to quaternary structure, F-type ATPases have 2 components, CF(1) - the catalytic core - and CF(0) - the membrane proton channel. CF(1) has five subunits: alpha(3), beta(3), gamma(1), delta(1), epsilon(1). CF(0) has four main subunits: a(1), b(1), b'(1) and c(9-12).

Its subcellular location is the plastid. The protein resides in the chloroplast thylakoid membrane. It carries out the reaction ATP + H2O + 4 H(+)(in) = ADP + phosphate + 5 H(+)(out). In terms of biological role, produces ATP from ADP in the presence of a proton gradient across the membrane. The catalytic sites are hosted primarily by the beta subunits. The protein is ATP synthase subunit beta, chloroplastic of Castanea sativa (Sweet chestnut).